Reading from the N-terminus, the 180-residue chain is Interleukin-17B (180 aa).

Positions 1–22 are cleaved as a signal peptide; that stretch reads MDWPHSLLFLLAISIFLAPSHP. The tract at residues 22–44 is disordered; that stretch reads PRNTKGKRKGQGRPSPLAPGPHQ. The span at 23–32 shows a compositional bias: basic residues; the sequence is RNTKGKRKGQ. N75 carries N-linked (GlcNAc...) asparagine glycosylation. 2 disulfides stabilise this stretch: C121-C176 and C126-C178.

Belongs to the IL-17 family.

It is found in the secreted. Functionally, stimulates the release of tumor necrosis factor alpha and IL-1-beta from the monocytic cell line THP-1. This is Interleukin-17B (Il17b) from Mus musculus (Mouse).